The sequence spans 628 residues: uncharacterized protein (628 aa).

Disordered regions lie at residues methionine 1–alanine 65 and serine 80–serine 125. A compositionally biased stretch (low complexity) spans isoleucine 12–proline 21. The span at proline 25 to glutamate 37 shows a compositional bias: polar residues. Low complexity-rich tracts occupy residues serine 48 to serine 64 and serine 87 to serine 102. The span at aspartate 103–serine 116 shows a compositional bias: basic and acidic residues. The next 12 helical transmembrane spans lie at isoleucine 157–leucine 177, valine 203–methionine 223, leucine 230–glycine 250, phenylalanine 259–phenylalanine 279, isoleucine 294–alanine 314, leucine 324–phenylalanine 344, leucine 417–tyrosine 437, valine 454–proline 474, methionine 483–valine 503, valine 511–valine 531, valine 542–alanine 562, and methionine 583–phenylalanine 603.

The protein belongs to the major facilitator superfamily. Allantoate permease family.

The protein resides in the membrane. This is an uncharacterized protein from Schizosaccharomyces pombe (strain 972 / ATCC 24843) (Fission yeast).